Consider the following 356-residue polypeptide: UDP-N-acetylglucosamine--N-acetylmuramyl-(pentapeptide) pyrophosphoryl-undecaprenol N-acetylglucosamine transferase (356 aa).

Residues 10–12 (TAG), Asn123, Arg159, Ser193, Ile240, and Gln284 contribute to the UDP-N-acetyl-alpha-D-glucosamine site.

This sequence belongs to the glycosyltransferase 28 family. MurG subfamily.

Its subcellular location is the cell membrane. The enzyme catalyses di-trans,octa-cis-undecaprenyl diphospho-N-acetyl-alpha-D-muramoyl-L-alanyl-D-glutamyl-meso-2,6-diaminopimeloyl-D-alanyl-D-alanine + UDP-N-acetyl-alpha-D-glucosamine = di-trans,octa-cis-undecaprenyl diphospho-[N-acetyl-alpha-D-glucosaminyl-(1-&gt;4)]-N-acetyl-alpha-D-muramoyl-L-alanyl-D-glutamyl-meso-2,6-diaminopimeloyl-D-alanyl-D-alanine + UDP + H(+). The protein operates within cell wall biogenesis; peptidoglycan biosynthesis. Cell wall formation. Catalyzes the transfer of a GlcNAc subunit on undecaprenyl-pyrophosphoryl-MurNAc-pentapeptide (lipid intermediate I) to form undecaprenyl-pyrophosphoryl-MurNAc-(pentapeptide)GlcNAc (lipid intermediate II). This chain is UDP-N-acetylglucosamine--N-acetylmuramyl-(pentapeptide) pyrophosphoryl-undecaprenol N-acetylglucosamine transferase, found in Corynebacterium glutamicum (strain R).